The following is a 417-amino-acid chain: Serine hydroxymethyltransferase (417 aa).

Residues leucine 112 and 116–118 (GHL) contribute to the (6S)-5,6,7,8-tetrahydrofolate site. Lysine 221 bears the N6-(pyridoxal phosphate)lysine mark. Glutamate 247 contributes to the (6S)-5,6,7,8-tetrahydrofolate binding site.

It belongs to the SHMT family. Homodimer. Requires pyridoxal 5'-phosphate as cofactor.

Its subcellular location is the cytoplasm. It carries out the reaction (6R)-5,10-methylene-5,6,7,8-tetrahydrofolate + glycine + H2O = (6S)-5,6,7,8-tetrahydrofolate + L-serine. Its pathway is one-carbon metabolism; tetrahydrofolate interconversion. It functions in the pathway amino-acid biosynthesis; glycine biosynthesis; glycine from L-serine: step 1/1. In terms of biological role, catalyzes the reversible interconversion of serine and glycine with tetrahydrofolate (THF) serving as the one-carbon carrier. This reaction serves as the major source of one-carbon groups required for the biosynthesis of purines, thymidylate, methionine, and other important biomolecules. Also exhibits THF-independent aldolase activity toward beta-hydroxyamino acids, producing glycine and aldehydes, via a retro-aldol mechanism. This chain is Serine hydroxymethyltransferase, found in Borrelia hermsii (strain HS1 / DAH).